We begin with the raw amino-acid sequence, 283 residues long: Phosphatidylglycerol--prolipoprotein diacylglyceryl transferase (283 aa).

The next 4 membrane-spanning stretches (helical) occupy residues 20-40 (LGPV…FVAM), 51-71 (GGNP…GIIG), 97-117 (ITNG…AVYF), and 123-143 (GVAF…AQAI). A 1,2-diacyl-sn-glycero-3-phospho-(1'-sn-glycerol) is bound at residue Arg145. 2 helical membrane passes run 192 to 212 (VHPT…VLLW) and 255 to 275 (INVI…FALR).

This sequence belongs to the Lgt family.

The protein localises to the cell membrane. The catalysed reaction is L-cysteinyl-[prolipoprotein] + a 1,2-diacyl-sn-glycero-3-phospho-(1'-sn-glycerol) = an S-1,2-diacyl-sn-glyceryl-L-cysteinyl-[prolipoprotein] + sn-glycerol 1-phosphate + H(+). It functions in the pathway protein modification; lipoprotein biosynthesis (diacylglyceryl transfer). Its function is as follows. Catalyzes the transfer of the diacylglyceryl group from phosphatidylglycerol to the sulfhydryl group of the N-terminal cysteine of a prolipoprotein, the first step in the formation of mature lipoproteins. The chain is Phosphatidylglycerol--prolipoprotein diacylglyceryl transferase from Corynebacterium diphtheriae (strain ATCC 700971 / NCTC 13129 / Biotype gravis).